A 93-amino-acid polypeptide reads, in one-letter code: Neurophysin 1 (93 aa).

Disulfide bonds link Cys-10-Cys-54, Cys-13-Cys-27, Cys-21-Cys-44, Cys-28-Cys-34, Cys-61-Cys-74, Cys-68-Cys-86, and Cys-75-Cys-80.

The protein belongs to the vasopressin/oxytocin family.

It localises to the secreted. Neurophysin 1 specifically binds oxytocin. The chain is Neurophysin 1 from Anser anser anser (Western greylag goose).